We begin with the raw amino-acid sequence, 33 residues long: Omega-conotoxin-like Vn2 (33 aa).

Intrachain disulfides connect Cys-3-Cys-20, Cys-10-Cys-24, and Cys-19-Cys-28. A Proline amide modification is found at Pro-33.

Expressed by the venom duct.

The protein resides in the secreted. Its function is as follows. Omega-conotoxins act at presynaptic membranes, they bind and block voltage-gated calcium channels (Cav). Has strong insecticidal properties at a dose of only 100 pmol/g of body weight (when injected into the haemocoel of the wax moth G.mellonella larvae). Provoques tremor and uncontrolled movements in insect larvae, that are typical symptoms caused by neurotoxins. On fish G.niger, intraperitoneal injection of the toxin causes full extension of the fins, change in posture, breathing difficulties (at 30 and 100 pmol/g body weight) and death (at 100 pmol/g body weight). This chain is Omega-conotoxin-like Vn2, found in Conus ventricosus (Mediterranean cone).